We begin with the raw amino-acid sequence, 908 residues long: Transcriptional repressor ILP1 (908 aa).

Disordered stretches follow at residues 1-113 (MGSN…PQAG) and 238-277 (VGPRPQKDDKKGVFDFGDENPTAKETTTSSIYEDEDEEDK). Over residues 25 to 47 (ATPSSKPTSTLSSSKPKTLSASA) the composition is skewed to low complexity. Positions 426–453 (MQNKGSLIEEIEDQMKELNEKHALSILE) form a coiled coil. A compositionally biased stretch (basic and acidic residues) spans 513-530 (EFGRDENLQKRREVEQRA). The tract at residues 513–574 (EFGRDENLQK…ESDTETSAYK (62 aa)) is disordered.

This sequence belongs to the GCF family. In terms of assembly, interacts with STIPL1/NTR1.

It is found in the nucleus. Functionally, transcriptional repressor regulating endoreduplication through control of A-type cyclins expression. Does not bind to promoter sequences (in vitro) and may act by interacting with tissue-specific transcription factors. Enhances the endocycle in endoreduplicating cells in seedlings. Required for efficient splicing. This Arabidopsis thaliana (Mouse-ear cress) protein is Transcriptional repressor ILP1.